A 418-amino-acid chain; its full sequence is 3-deoxy-D-manno-octulosonic acid transferase (418 aa).

The chain crosses the membrane as a helical; Signal-anchor span at residues 7 to 27 (FLSFLLLPIYFVIIFIRLLIG). Glutamate 60 functions as the Proton acceptor in the catalytic mechanism. CMP is bound by residues 264-265 (PR), 305-307 (FGE), and 330-333 (NILE).

This sequence belongs to the glycosyltransferase group 1 family. Glycosyltransferase 30 subfamily.

It is found in the cell inner membrane. It catalyses the reaction lipid IVA (E. coli) + CMP-3-deoxy-beta-D-manno-octulosonate = alpha-Kdo-(2-&gt;6)-lipid IVA (E. coli) + CMP + H(+). It participates in bacterial outer membrane biogenesis; LPS core biosynthesis. Involved in lipopolysaccharide (LPS) biosynthesis. Catalyzes the transfer of 3-deoxy-D-manno-octulosonate (Kdo) residue(s) from CMP-Kdo to lipid IV(A), the tetraacyldisaccharide-1,4'-bisphosphate precursor of lipid A. This Rickettsia bellii (strain RML369-C) protein is 3-deoxy-D-manno-octulosonic acid transferase (waaA).